Reading from the N-terminus, the 422-residue chain is Serine hydroxymethyltransferase (422 aa).

(6S)-5,6,7,8-tetrahydrofolate contacts are provided by residues L121 and 125–127 (GHL). K230 carries the post-translational modification N6-(pyridoxal phosphate)lysine. 355–357 (SPF) contributes to the (6S)-5,6,7,8-tetrahydrofolate binding site.

Belongs to the SHMT family. In terms of assembly, homodimer. Requires pyridoxal 5'-phosphate as cofactor.

The protein localises to the cytoplasm. The enzyme catalyses (6R)-5,10-methylene-5,6,7,8-tetrahydrofolate + glycine + H2O = (6S)-5,6,7,8-tetrahydrofolate + L-serine. It participates in one-carbon metabolism; tetrahydrofolate interconversion. Its pathway is amino-acid biosynthesis; glycine biosynthesis; glycine from L-serine: step 1/1. Functionally, catalyzes the reversible interconversion of serine and glycine with tetrahydrofolate (THF) serving as the one-carbon carrier. This reaction serves as the major source of one-carbon groups required for the biosynthesis of purines, thymidylate, methionine, and other important biomolecules. Also exhibits THF-independent aldolase activity toward beta-hydroxyamino acids, producing glycine and aldehydes, via a retro-aldol mechanism. This chain is Serine hydroxymethyltransferase, found in Teredinibacter turnerae (strain ATCC 39867 / T7901).